The primary structure comprises 819 residues: Sulfate permease 2 (819 aa).

The N-linked (GlcNAc...) asparagine glycan is linked to N24. Helical transmembrane passes span Y72–V92, L104–A124, I129–Q149, L172–I192, A194–I214, F273–L293, I328–I348, S365–P385, F454–F474, and I477–A497. One can recognise an STAS domain in the interval E551 to V708. N581 is a glycosylation site (N-linked (GlcNAc...) asparagine). The tract at residues E726 to T766 is disordered. Residues E746–E755 are compositionally biased toward gly residues.

Belongs to the SLC26A/SulP transporter (TC 2.A.53) family. As to expression, mainly found in mycelia.

It is found in the membrane. Uptake of sulfate into the cell. The protein is Sulfate permease 2 (cys-14) of Neurospora crassa (strain ATCC 24698 / 74-OR23-1A / CBS 708.71 / DSM 1257 / FGSC 987).